We begin with the raw amino-acid sequence, 309 residues long: Calcium homeostasis modulator protein 5 (309 aa).

Residues Met1–Lys15 are Cytoplasmic-facing. The chain crosses the membrane as a helical span at residues Thr16–Val37. Residues Arg32 and Val37 each coordinate a 1,2-diacyl-sn-glycero-3-phosphate. The Extracellular segment spans residues Ala38–Ile45. 3 disulfides stabilise this stretch: Cys41–Cys127, Cys43–Cys158, and Cys142–Cys149. Residues Glu46–Asn70 form a helical membrane-spanning segment. Topologically, residues Asn71 to Val99 are cytoplasmic. A helical transmembrane segment spans residues Leu100 to Met129. Asn121 contacts a 1,2-diacyl-sn-glycero-3-phosphate. Residues Ser130–Ser174 are Extracellular-facing. Residues Leu175–Tyr200 form a helical membrane-spanning segment. The Cytoplasmic portion of the chain corresponds to Ala201 to Leu309. Arg202 contacts a 1,2-diacyl-sn-glycero-3-phosphate.

The protein belongs to the CALHM family. As to quaternary structure, oligomerizes to form undecameric cone-shaped channels.

It is found in the membrane. Functionally, may assemble to form large pore channels with gating and ion conductance likely regulated by membrane lipids. The polypeptide is Calcium homeostasis modulator protein 5 (Rattus norvegicus (Rat)).